Reading from the N-terminus, the 190-residue chain is uncharacterized protein (190 aa).

The Cytoplasmic segment spans residues 1–16; it reads MAILPEFISQTPPVTR. The helical transmembrane segment at 17–37 threads the bilayer; it reads YIVLGTLFTTLAVNFGYVSDL. Residues 38-55 are Lumenal-facing; the sequence is KIFFNWKLFLAKGEYWRA. A helical membrane pass occupies residues 56–76; that stretch reads ITTFLYVGPFGLELILYLSFL. Topologically, residues 77–98 are cytoplasmic; the sequence is LRFMSMLERSSPPPQTQSFLKT. Residues 99–119 form a helical membrane-spanning segment; sequence VLIVWFSLLVTSYFSYMPFAA. Over 120-138 the chain is Lumenal; the sequence is SYFSFTMLYIWSWKHPLYR. A helical transmembrane segment spans residues 139 to 159; that stretch reads ISILGLFDVKAPYVPWVMVLL. The Cytoplasmic portion of the chain corresponds to 160-163; sequence RWLR. Residues 164 to 184 traverse the membrane as a helical segment; that stretch reads TGIFPLLDLISALIGHVYFFV. The Lumenal portion of the chain corresponds to 185 to 190; the sequence is TDFSTV.

This sequence belongs to the derlin family.

The protein resides in the endoplasmic reticulum membrane. This is an uncharacterized protein from Schizosaccharomyces pombe (strain 972 / ATCC 24843) (Fission yeast).